Consider the following 160-residue polypeptide: Surface-adhesin protein E (160 aa).

An N-terminal signal peptide occupies residues 1-15 (MKKIILTLSLGLLTA). Cys16 is lipidated: N-palmitoyl cysteine. A lipid anchor (S-diacylglycerol cysteine) is attached at Cys16.

It localises to the cell outer membrane. Its subcellular location is the cell surface. Its function is as follows. Acts as a multifunctional adhesin involved in direct interactions with host epithelial cells and host proteins. This Haemophilus influenzae (strain ATCC 51907 / DSM 11121 / KW20 / Rd) protein is Surface-adhesin protein E (pe).